The primary structure comprises 93 residues: Photosystem I iron-sulfur center (93 aa).

2 consecutive 4Fe-4S ferredoxin-type domains span residues 13–43 and 50–80; these read KDHE…MVPS and QVVT…IRVY. Positions 23, 26, 29, 33, 60, 63, 66, and 70 each coordinate [4Fe-4S] cluster.

In terms of assembly, the eukaryotic PSI reaction center is composed of at least 11 subunits. The cofactor is [4Fe-4S] cluster.

It is found in the plastid. The protein localises to the chloroplast thylakoid membrane. It catalyses the reaction reduced [plastocyanin] + hnu + oxidized [2Fe-2S]-[ferredoxin] = oxidized [plastocyanin] + reduced [2Fe-2S]-[ferredoxin]. Apoprotein for the two 4Fe-4S centers FA and FB of photosystem I (PSI); essential for photochemical activity. FB is the terminal electron acceptor of PSI, donating electrons to ferredoxin. The C-terminus interacts with PsaA/B/D and helps assemble the protein into the PSI complex. Required for binding of PsaD and PsaE to PSI. PSI is a plastocyanin-ferredoxin oxidoreductase, converting photonic excitation into a charge separation, which transfers an electron from the donor P700 chlorophyll pair to the spectroscopically characterized acceptors A0, A1, FX, FA and FB in turn. The chain is Photosystem I iron-sulfur center from Bigelowiella natans (Pedinomonas minutissima).